The chain runs to 398 residues: Stearoyl-[acyl-carrier-protein] 9-desaturase, chloroplastic (398 aa).

The N-terminal 34 residues, 1 to 34 (MALKLHHTAFNPSMAVTSSGLPRSYHLRSHRVFM), are a transit peptide targeting the chloroplast. The disordered stretch occupies residues 46–66 (IPNAKKPHMPPREAHVQKTHS). E140, E178, H181, E231, E264, and H267 together coordinate Fe cation.

Belongs to the fatty acid desaturase type 2 family. As to quaternary structure, homodimer. The cofactor is Fe(2+).

It localises to the plastid. The protein resides in the chloroplast. It catalyses the reaction octadecanoyl-[ACP] + 2 reduced [2Fe-2S]-[ferredoxin] + O2 + 2 H(+) = (9Z)-octadecenoyl-[ACP] + 2 oxidized [2Fe-2S]-[ferredoxin] + 2 H2O. It functions in the pathway lipid metabolism; fatty acid metabolism. In terms of biological role, converts stearoyl-ACP to oleoyl-ACP by introduction of a cis double bond between carbons 9 and 10 of the acyl chain. The protein is Stearoyl-[acyl-carrier-protein] 9-desaturase, chloroplastic of Simmondsia chinensis (Jojoba).